A 73-amino-acid polypeptide reads, in one-letter code: Protein SlyX homolog (73 aa).

Belongs to the SlyX family.

The sequence is that of Protein SlyX homolog from Haemophilus ducreyi (strain 35000HP / ATCC 700724).